Consider the following 401-residue polypeptide: MTERIVLAYSGGLDTSVAIGWIGEATGAEVIAVAVDVGQGGESLETIRQRALGCGAVEAYVADASDEFANEYCMPTLKANALYQGHYPLVSAISRPVIVKHLVKAAREFGATTVAHGCTGKGNDQVRFEVGIQTLGPDLKCIAPVRDLALTRDKAIAFAEEKGLPIETTKKNPYSIDQNVWGRAVETGYLEDIWNAPTKDIYDYTATPEFPPAPDEVIISFEAGVPVAIDGVRVTPLQAIKELNRRAGAQGVGRIDVVEDRLVGIKSREIYEAPGAMALITAHKHLEDITVEREQARFKATVGQRWSELVYDGQWFSPLKRSLDAFIEDTQKYVSGDIRMTLHGGQAVVNGRRSETSLYDFDLATYDTGDTFDQSMARGFIELWGMSAKVASGRDIRVAGK.

8–16 (AYSGGLDTS) serves as a coordination point for ATP. L-citrulline is bound at residue Y87. Position 117 (G117) interacts with ATP. L-aspartate-binding residues include T119, N123, and D124. N123 contacts L-citrulline. Residues R127, S175, E259, and Y271 each contribute to the L-citrulline site.

It belongs to the argininosuccinate synthase family. Type 1 subfamily. As to quaternary structure, homotetramer.

The protein localises to the cytoplasm. The enzyme catalyses L-citrulline + L-aspartate + ATP = 2-(N(omega)-L-arginino)succinate + AMP + diphosphate + H(+). It participates in amino-acid biosynthesis; L-arginine biosynthesis; L-arginine from L-ornithine and carbamoyl phosphate: step 2/3. The polypeptide is Argininosuccinate synthase (Arthrobacter sp. (strain FB24)).